Reading from the N-terminus, the 360-residue chain is (+)-6a-hydroxymaackiain 3-O-methyltransferase 2 (360 aa).

S-adenosyl-L-methionine is bound by residues 202-205 (VAGG), D226, 226-227 (DQ), 246-247 (DM), and K260. H264 acts as the Proton acceptor in catalysis.

This sequence belongs to the class I-like SAM-binding methyltransferase superfamily. Cation-independent O-methyltransferase family. COMT subfamily.

It catalyses the reaction (+)-6a-hydroxymaackiain + S-adenosyl-L-methionine = (+)-pisatin + S-adenosyl-L-homocysteine + H(+). Its function is as follows. 3-O-methyltransferase involved in the phytoalexin pisatin biosynthesis. Can use (+)-6a-hydroxymaackiain, (+)-maackiain and with a lower activity (+)-medicarpin and 2,7,4'-trihydroxyisoflavanone as substrates, but not (-)-6a-hydroxymaackiain, daidzein, formononetin or isoliquiritigenin. The polypeptide is (+)-6a-hydroxymaackiain 3-O-methyltransferase 2 (HMM2) (Pisum sativum (Garden pea)).